The following is a 238-amino-acid chain: Mannose-binding protein A (238 aa).

Positions 1–17 are cleaved as a signal peptide; sequence MLLLPLLVLLCVVSVSS. Basic and acidic residues predominate over residues 38–49; the sequence is DGRDGPKGEKGE. A disordered region spans residues 38 to 87; sequence DGRDGPKGEKGEPGQGLRGLQGPPGKLGPPGSVGAPGSQGPKGQKGDRGD. A Collagen-like domain is found at 39-88; sequence GRDGPKGEKGEPGQGLRGLQGPPGKLGPPGSVGAPGSQGPKGQKGDRGDS. Position 43 is a 4-hydroxyproline (Pro-43). A 5-hydroxylysine mark is found at Lys-44 and Lys-47. Residues Lys-44 and Lys-47 are each glycosylated (O-linked (Gal...) hydroxylysine). Residues Pro-50, Pro-61, Pro-67, Pro-73, and Pro-78 each carry the 4-hydroxyproline modification. Residues Lys-79 and Lys-82 each carry the 5-hydroxylysine modification. Lys-79 and Lys-82 each carry an O-linked (Gal...) hydroxylysine glycan. The 96-residue stretch at 143-238 folds into the C-type lectin domain; that stretch reads ALCSELRGTV…SHTAVCEFPA (96 aa). Disulfide bonds link Cys-145–Cys-234 and Cys-212–Cys-226. Ca(2+)-binding residues include Asp-178, Glu-182, Glu-202, Asn-204, Asp-205, Glu-210, Asp-211, Asn-222, and Asp-223. A calcium-dependent carbohydrate binding region spans residues 202–210; that stretch reads EPNDHGSGE.

In terms of assembly, homotrimer. Forms higher oligomeric complexes formed by the association of two, three or more homotrimers. Oligomerization occurs in the endoplasmic reticulum. Interacts with MASP1 and MASP2. Hydroxylated on lysine and proline residues within the collagen-like domain. Post-translationally, O-glycosylated. O-linked glycans on hydroxylysine residues consist of Glc-Gal disaccharides bound to the oxygen atom of post-translationally added hydroxyl groups. As to expression, detected in blood serum (at protein level).

Its subcellular location is the secreted. In terms of biological role, calcium-dependent lectin. Plays a role in the innate immune response by binding mannose, fucose and N-acetylglucosamine moieties on different microorganisms and mediating activation of the lectin complement pathway. Binds to late apoptotic cells, as well as to apoptotic blebs and to necrotic cells, but not to early apoptotic cells, facilitating their uptake by macrophages. The chain is Mannose-binding protein A (Mbl1) from Rattus norvegicus (Rat).